The sequence spans 362 residues: 3-dehydroquinate synthase (362 aa).

NAD(+)-binding positions include 71-76 (DGEQYK), 105-109 (GVVGD), 129-130 (TT), K142, K151, and 169-172 (CLKT). Zn(2+) is bound by residues E184, H247, and H264.

This sequence belongs to the sugar phosphate cyclases superfamily. Dehydroquinate synthase family. Co(2+) serves as cofactor. Zn(2+) is required as a cofactor. The cofactor is NAD(+).

It localises to the cytoplasm. It carries out the reaction 7-phospho-2-dehydro-3-deoxy-D-arabino-heptonate = 3-dehydroquinate + phosphate. It functions in the pathway metabolic intermediate biosynthesis; chorismate biosynthesis; chorismate from D-erythrose 4-phosphate and phosphoenolpyruvate: step 2/7. Functionally, catalyzes the conversion of 3-deoxy-D-arabino-heptulosonate 7-phosphate (DAHP) to dehydroquinate (DHQ). This Escherichia coli O81 (strain ED1a) protein is 3-dehydroquinate synthase.